Consider the following 400-residue polypeptide: Putative zinc-binding protein ORF78 (400 aa).

The segment at 9 to 33 (LPRKRRAVAQPRTRQPPPKVHREDT) is disordered.

The protein is Putative zinc-binding protein ORF78 (ORF78) of Ictalurid herpesvirus 1 (strain Auburn) (IcHV-1).